The sequence spans 208 residues: Small ribosomal subunit protein uS4 (208 aa).

The S4 RNA-binding domain occupies 98-168 (RRLDNVVFRL…DSLDTVVRRG (71 aa)).

This sequence belongs to the universal ribosomal protein uS4 family. Part of the 30S ribosomal subunit. Contacts protein S5. The interaction surface between S4 and S5 is involved in control of translational fidelity.

Functionally, one of the primary rRNA binding proteins, it binds directly to 16S rRNA where it nucleates assembly of the body of the 30S subunit. With S5 and S12 plays an important role in translational accuracy. This chain is Small ribosomal subunit protein uS4, found in Desulforapulum autotrophicum (strain ATCC 43914 / DSM 3382 / VKM B-1955 / HRM2) (Desulfobacterium autotrophicum).